The following is a 648-amino-acid chain: Translation factor GUF1 homolog, mitochondrial (648 aa).

One can recognise a tr-type G domain in the interval 55–247 (ERVRNFSIIA…AVIERIPSPP (193 aa)). Residues 64–71 (AHVDHGKS), 140–144 (DTPGH), and 194–197 (NKID) contribute to the GTP site.

The protein belongs to the TRAFAC class translation factor GTPase superfamily. Classic translation factor GTPase family. LepA subfamily.

It localises to the mitochondrion inner membrane. The enzyme catalyses GTP + H2O = GDP + phosphate + H(+). In terms of biological role, promotes mitochondrial protein synthesis. May act as a fidelity factor of the translation reaction, by catalyzing a one-codon backward translocation of tRNAs on improperly translocated ribosomes. Binds to mitochondrial ribosomes in a GTP-dependent manner. In Oryza sativa subsp. indica (Rice), this protein is Translation factor GUF1 homolog, mitochondrial.